The chain runs to 96 residues: MALEMTQRQGIVVWLYSLRQVKQLRRYGLVYYTSKRMKYVYLYVDADQAPAVIERLKKLHYVKRVTRSQRPMLDMEFGALAELANQETATKAALKE.

It belongs to the UPF0298 family.

The protein resides in the cytoplasm. In Latilactobacillus sakei subsp. sakei (strain 23K) (Lactobacillus sakei subsp. sakei), this protein is UPF0298 protein LCA_1075.